The chain runs to 427 residues: UPF0761 membrane protein Cphamn1_1013 (427 aa).

The next 6 membrane-spanning stretches (helical) occupy residues 51–71, 107–127, 147–167, 188–208, 218–238, and 251–271; these read LLSL…SPVF, TVPT…ISTI, FTLY…GLVA, ILSY…YMLV, AVSG…WFSF, and GALS…VVAL.

It belongs to the UPF0761 family.

Its subcellular location is the cell inner membrane. This chain is UPF0761 membrane protein Cphamn1_1013, found in Chlorobium phaeobacteroides (strain BS1).